A 284-amino-acid polypeptide reads, in one-letter code: UDP-N-acetylenolpyruvoylglucosamine reductase (284 aa).

The FAD-binding PCMH-type domain occupies 21-180; it reads KIGGPARLFV…LKAAFKLKKA (160 aa). Residue Arg-159 is part of the active site. Residue Ser-209 is the Proton donor of the active site. Residue Glu-280 is part of the active site.

It belongs to the MurB family. Requires FAD as cofactor.

It localises to the cytoplasm. The catalysed reaction is UDP-N-acetyl-alpha-D-muramate + NADP(+) = UDP-N-acetyl-3-O-(1-carboxyvinyl)-alpha-D-glucosamine + NADPH + H(+). Its pathway is cell wall biogenesis; peptidoglycan biosynthesis. Cell wall formation. The protein is UDP-N-acetylenolpyruvoylglucosamine reductase of Pseudothermotoga lettingae (strain ATCC BAA-301 / DSM 14385 / NBRC 107922 / TMO) (Thermotoga lettingae).